A 482-amino-acid chain; its full sequence is tRNA sulfurtransferase (482 aa).

Residues 61–165 (EAIRDALTRI…QDRLLLIKSR (105 aa)) enclose the THUMP domain. ATP-binding positions include 183-184 (LI), lysine 265, glycine 287, and glutamine 296. Cysteine 344 and cysteine 456 are joined by a disulfide. A Rhodanese domain is found at 404-482 (FVPTDVLLDI…GFSNVKVYRP (79 aa)). The active-site Cysteine persulfide intermediate is the cysteine 456.

Belongs to the ThiI family.

The protein resides in the cytoplasm. The catalysed reaction is [ThiI sulfur-carrier protein]-S-sulfanyl-L-cysteine + a uridine in tRNA + 2 reduced [2Fe-2S]-[ferredoxin] + ATP + H(+) = [ThiI sulfur-carrier protein]-L-cysteine + a 4-thiouridine in tRNA + 2 oxidized [2Fe-2S]-[ferredoxin] + AMP + diphosphate. It carries out the reaction [ThiS sulfur-carrier protein]-C-terminal Gly-Gly-AMP + S-sulfanyl-L-cysteinyl-[cysteine desulfurase] + AH2 = [ThiS sulfur-carrier protein]-C-terminal-Gly-aminoethanethioate + L-cysteinyl-[cysteine desulfurase] + A + AMP + 2 H(+). Its pathway is cofactor biosynthesis; thiamine diphosphate biosynthesis. Its function is as follows. Catalyzes the ATP-dependent transfer of a sulfur to tRNA to produce 4-thiouridine in position 8 of tRNAs, which functions as a near-UV photosensor. Also catalyzes the transfer of sulfur to the sulfur carrier protein ThiS, forming ThiS-thiocarboxylate. This is a step in the synthesis of thiazole, in the thiamine biosynthesis pathway. The sulfur is donated as persulfide by IscS. The sequence is that of tRNA sulfurtransferase from Pectobacterium atrosepticum (strain SCRI 1043 / ATCC BAA-672) (Erwinia carotovora subsp. atroseptica).